A 1107-amino-acid polypeptide reads, in one-letter code: Unconventional myosin-Ib (1107 aa).

The 687-residue stretch at 15–701 (IGVGDMVLLE…TLFQLEDLRK (687 aa)) folds into the Myosin motor domain. At S60 the chain carries Phosphoserine. 108–115 (GESGAGKT) provides a ligand contact to ATP. Residue K287 forms a Glycyl lysine isopeptide (Lys-Gly) (interchain with G-Cter in SUMO1); alternate linkage. Residue K287 forms a Glycyl lysine isopeptide (Lys-Gly) (interchain with G-Cter in SUMO2); alternate linkage. The actin-binding stretch occupies residues 592-599 (YIRCIKPN). 5 IQ domains span residues 704–727 (LEDL…FLLM), 728–749 (KRSQ…RYQQ), 750–778 (IKSS…HQKR), 780–807 (KEAA…EEAR), and 808–837 (RKHA…ANAG). Positions 923-1107 (KALYPSSVGQ…NNRLLEVAVP (185 aa)) constitute a TH1 domain.

It belongs to the TRAFAC class myosin-kinesin ATPase superfamily. Myosin family. As to expression, prominent expression is seen in the brain, lung and liver. It is also expressed in the heart and testis. A high level expression is seen in virtually all neurons (but not glia) in the postnatal and adult mouse brain and in neuroblasts of the cerebellar external granular layer.

Functionally, motor protein that may participate in process critical to neuronal development and function such as cell migration, neurite outgrowth and vesicular transport. This Mus musculus (Mouse) protein is Unconventional myosin-Ib (Myo1b).